A 1153-amino-acid polypeptide reads, in one-letter code: MTLKALLVTALALCHGFNLDTEHPMTFQENAKGFGQNVVQLGGTSVVVAAPQEAKAVNQTGALYQCDYSTSRCHPIPLQVPPEAVNMSLGLSLAVSTVPQQLLACGPTVHQNCKENTYVNGLCYLFGSNLLRPPQQFPEALRECPQQESDIVFLIDGSGSINNIDFQKMKEFVSTVMEQFKKSKTLFSLMQYSDEFRIHFTFNDFKRNPSPRSHVSPIKQLNGRTKTASGIRKVVRELFHKTNGARENAAKILVVITDGEKFGDPLDYKDVIPEADRAGVIRYVIGVGNAFNKPQSRRELDTIASKPAGEHVFQVDNFEALNTIQNQLQEKIFAIEGTQTGSTSSFEHEMSQEGFSASITSNGPLLGSVGSFDWAGGAFLYTSKDKVTFINTTRVDSDMNDAYLGYASAVILRNRVQSLVLGAPRYQHIGLVVMFRENFGTWEPHTSIKGSQIGSYFGASLCSVDMDADGNTNLILIGAPHYYEKTRGGQVSVCPLPRGRARWQCEALLHGDQGHPWGRFGAALTVLGDVNGDKLTDVAIGAPGEQENQGAVYIFYGASIASLSASHSHRIIGAHFSPGLQYFGQSLSGGKDLTMDGLMDLAVGAQGHLLLLRAQPVLRLEATMEFSPKKVARSVFACQEQVLKNKDAGEVRVCLRVRKNTKDRLREGDIQSTVTYDLALDPVRSRIRAFFDETKNNTRRRTQVFGLMQKCETLKLILPDCVDDSVSPIILRLNYTLVGEPLRSFGNLRPVLAMDAQRFFTAMFPFEKNCGNDSICQDDLSITMSAMGLDTLVVGGPQDFNMSVTLRNDGEDSYGTQVTVYYPSGLSYRKDSASQNPLTKKPWFVKPAESSSSSEGHGALKSTTWNINHPIFPANSEVTFNVTFDVDSHASFGNKLLLKAIVASENNMSRTHKTKFQLELPVKYAIYMIVTSDESSIRYLNFTASEMTSKVIQHQYQFNNLGQRSLPVSVVFWIPVQINNVTVWDHPQVIFSQNLSSACHTEQKSPPHSNFRDQLERTPVLNCSVAVCKRIQCDLPSFNTQEIFNVTLKGNLSFDWYIKTSHGHLLLVSSTEILFNDSAFALLPGQESYVRSKTETKVEPYEVHNPVPLIVGSSIGGLVLLALITAGLYKLGFFKRQYKDMMNEAAPQDAPPQ.

The signal sequence occupies residues 1–16; the sequence is MTLKALLVTALALCHG. Residues 17 to 1105 lie on the Extracellular side of the membrane; the sequence is FNLDTEHPMT…TKVEPYEVHN (1089 aa). FG-GAP repeat units lie at residues 18–75 and 76–135; these read NLDT…RCHP and IPLQ…RPPQ. N-linked (GlcNAc...) asparagine glycosylation is present at Asn58. A disulfide bond links Cys66 and Cys73. N-linked (GlcNAc...) asparagine glycosylation is present at Asn86. Cys105 and Cys123 form a disulfide bridge. The region spanning 164-338 is the VWFA domain; sequence IDFQKMKEFV…QEKIFAIEGT (175 aa). 5 FG-GAP repeats span residues 339 to 390, 391 to 442, 443 to 503, 506 to 564, and 569 to 629; these read QTGS…VTFI, NTTR…FGTW, EPHT…RARW, EALL…ASLS, and HRII…FSPK. N-linked (GlcNAc...) asparagine glycosylation is present at Asn391. Positions 465, 467, 469, 471, 473, 529, 531, 533, 537, 592, 596, and 600 each coordinate Ca(2+). An intrachain disulfide couples Cys654 to Cys711. N-linked (GlcNAc...) asparagine glycans are attached at residues Asn696, Asn734, Asn772, Asn801, Asn881, Asn907, Asn941, Asn980, Asn994, and Asn1022. The cysteines at positions 770 and 776 are disulfide-linked. Disulfide bonds link Cys999–Cys1023 and Cys1028–Cys1033. Residues Asn1045, Asn1051, and Asn1076 are each glycosylated (N-linked (GlcNAc...) asparagine). The chain crosses the membrane as a helical span at residues 1106 to 1129; that stretch reads PVPLIVGSSIGGLVLLALITAGLY. The Cytoplasmic segment spans residues 1130-1153; sequence KLGFFKRQYKDMMNEAAPQDAPPQ. The GFFKR motif motif lies at 1132 to 1136; that stretch reads GFFKR.

This sequence belongs to the integrin alpha chain family. Heterodimer of an alpha and a beta subunit. ITGAM associates with ITGB2. Found in a complex with CD177 and ITGB2/CD18. Interacts with JAM3. Interacts with THBD. Interacts with complement factor H/CFH; this interaction mediates adhesion of neutrophils to pathogens leading to pathogen clearance. Interacts with TMEM268; this interaction inhibits ITGAM degradation via the endosome-lysosome pathway. As to expression, predominantly expressed in monocytes and granulocytes. Expressed in a subset of peritoneal mast cells. Expressed in microglia (at protein level).

The protein resides in the cell membrane. Its subcellular location is the membrane raft. In terms of biological role, integrin ITGAM/ITGB2 is implicated in various adhesive interactions of monocytes, macrophages and granulocytes as well as in mediating the uptake of complement-coated particles and pathogens. It is identical with CR-3, the receptor for the iC3b fragment of the third complement component. It probably recognizes the R-G-D peptide in C3b. Integrin ITGAM/ITGB2 is also a receptor for fibrinogen, factor X and ICAM1. It recognizes P1 and P2 peptides of fibrinogen gamma chain. Regulates neutrophil migration. In association with beta subunit ITGB2/CD18, required for CD177-PRTN3-mediated activation of TNF primed neutrophils. May regulate phagocytosis-induced apoptosis in extravasated neutrophils. May play a role in mast cell development. Required with TYROBP/DAP12 in microglia to control production of microglial superoxide ions which promote the neuronal apoptosis that occurs during brain development. In Mus musculus (Mouse), this protein is Integrin alpha-M (Itgam).